Here is a 118-residue protein sequence, read N- to C-terminus: Acidic phospholipase A2 PA-3 (118 aa).

Cystine bridges form between Cys-11/Cys-71, Cys-27/Cys-117, Cys-29/Cys-45, Cys-44/Cys-98, Cys-51/Cys-91, Cys-60/Cys-84, and Cys-78/Cys-89. Ca(2+) is bound by residues Tyr-28, Gly-30, and Gly-32. His-48 is an active-site residue. Asp-49 contributes to the Ca(2+) binding site. Asp-92 is a catalytic residue.

It belongs to the phospholipase A2 family. Group I subfamily. D49 sub-subfamily. The cofactor is Ca(2+). Expressed by the venom gland.

The protein localises to the secreted. The enzyme catalyses a 1,2-diacyl-sn-glycero-3-phosphocholine + H2O = a 1-acyl-sn-glycero-3-phosphocholine + a fatty acid + H(+). Its function is as follows. PLA2 catalyzes the calcium-dependent hydrolysis of the 2-acyl groups in 3-sn-phosphoglycerides. The protein is Acidic phospholipase A2 PA-3 of Pseudechis australis (Mulga snake).